The chain runs to 233 residues: C-type lectin domain family 2 member D5 (233 aa).

Residues 1–52 (MPSSAHLQDPPPLLSRTLTQNEGQTSLRQSSSCGPSAASASESLSGSTESRI) form a disordered region. Residues 1–76 (MPSSAHLQDP…PLEYPAGLYC (76 aa)) lie on the Cytoplasmic side of the membrane. Polar residues predominate over residues 16–29 (RTLTQNEGQTSLRQ). The span at 30-50 (SSSCGPSAASASESLSGSTES) shows a compositional bias: low complexity. The chain crosses the membrane as a helical; Signal-anchor for type II membrane protein span at residues 77 to 97 (CYVVIIVLSVAVVALSVALSV). Residues 98–233 (KKTAQISTIN…KPNSYTSQCL (136 aa)) lie on the Extracellular side of the membrane. Positions 119–228 (VGNKCFYFNE…KSICRKPNSY (110 aa)) constitute a C-type lectin domain. Residue N132 is glycosylated (N-linked (GlcNAc...) asparagine).

Its subcellular location is the cell membrane. Functionally, lectin-type cell surface receptor. The polypeptide is C-type lectin domain family 2 member D5 (Ocil) (Rattus norvegicus (Rat)).